Reading from the N-terminus, the 89-residue chain is Calsenilin isoform 4 (89 aa).

The interval 27–57 (SSRDAEDQGSREGIGWQPPGRSWAHTTEQEG) is disordered.

As to expression, isoform 1 or isoform 4 (T+ forms) are expressed at equal levels with isoform 2 or isoform 3 (T- forms) in brain.

Its function is as follows. Unknown for isoform 4. Csen is involved in calcium-dependent transcriptional repression, regulation of potassium channels, and perhaps in processing of PSEN2 and apoptosis. The protein is Calsenilin isoform 4 (Kcnip3) of Mus musculus (Mouse).